The sequence spans 224 residues: Large ribosomal subunit protein bL25 (224 aa).

Positions 190–224 (EPAPAAEGAAPAEGAAAAAAGGKPAAKTAKPAAKK) are disordered.

Belongs to the bacterial ribosomal protein bL25 family. CTC subfamily. Part of the 50S ribosomal subunit; part of the 5S rRNA/L5/L18/L25 subcomplex. Contacts the 5S rRNA. Binds to the 5S rRNA independently of L5 and L18.

Its function is as follows. This is one of the proteins that binds to the 5S RNA in the ribosome where it forms part of the central protuberance. The protein is Large ribosomal subunit protein bL25 of Variovorax paradoxus (strain S110).